The primary structure comprises 508 residues: Photosystem II CP47 reaction center protein (508 aa).

6 consecutive transmembrane segments (helical) span residues 21-36 (SVHI…WAGS), 101-115 (IVFS…IWHW), 140-156 (GIHL…FGAF), 203-218 (IAAG…FHLS), 237-252 (VLSS…AFVV), and 457-472 (SFAL…HGAR).

The protein belongs to the PsbB/PsbC family. PsbB subfamily. PSII is composed of 1 copy each of membrane proteins PsbA, PsbB, PsbC, PsbD, PsbE, PsbF, PsbH, PsbI, PsbJ, PsbK, PsbL, PsbM, PsbT, PsbX, PsbY, PsbZ, Psb30/Ycf12, at least 3 peripheral proteins of the oxygen-evolving complex and a large number of cofactors. It forms dimeric complexes. Binds multiple chlorophylls. PSII binds additional chlorophylls, carotenoids and specific lipids. serves as cofactor.

Its subcellular location is the plastid. It localises to the chloroplast thylakoid membrane. Functionally, one of the components of the core complex of photosystem II (PSII). It binds chlorophyll and helps catalyze the primary light-induced photochemical processes of PSII. PSII is a light-driven water:plastoquinone oxidoreductase, using light energy to abstract electrons from H(2)O, generating O(2) and a proton gradient subsequently used for ATP formation. The protein is Photosystem II CP47 reaction center protein of Nasturtium officinale (Watercress).